Reading from the N-terminus, the 1433-residue chain is DNA-directed RNA polymerase subunit beta' (1433 aa).

Zn(2+) contacts are provided by cysteine 66, cysteine 68, cysteine 81, and cysteine 84. Aspartate 473, aspartate 475, and aspartate 477 together coordinate Mg(2+). Zn(2+) is bound by residues cysteine 815, cysteine 889, cysteine 896, and cysteine 899.

The protein belongs to the RNA polymerase beta' chain family. The RNAP catalytic core consists of 2 alpha, 1 beta, 1 beta' and 1 omega subunit. When a sigma factor is associated with the core the holoenzyme is formed, which can initiate transcription. Mg(2+) serves as cofactor. Requires Zn(2+) as cofactor.

The enzyme catalyses RNA(n) + a ribonucleoside 5'-triphosphate = RNA(n+1) + diphosphate. Functionally, DNA-dependent RNA polymerase catalyzes the transcription of DNA into RNA using the four ribonucleoside triphosphates as substrates. This is DNA-directed RNA polymerase subunit beta' from Porphyromonas gingivalis (strain ATCC BAA-308 / W83).